The following is a 94-amino-acid chain: Pyrimidine/purine nucleoside phosphorylase (94 aa).

It belongs to the nucleoside phosphorylase PpnP family.

It catalyses the reaction a purine D-ribonucleoside + phosphate = a purine nucleobase + alpha-D-ribose 1-phosphate. The catalysed reaction is adenosine + phosphate = alpha-D-ribose 1-phosphate + adenine. It carries out the reaction cytidine + phosphate = cytosine + alpha-D-ribose 1-phosphate. The enzyme catalyses guanosine + phosphate = alpha-D-ribose 1-phosphate + guanine. It catalyses the reaction inosine + phosphate = alpha-D-ribose 1-phosphate + hypoxanthine. The catalysed reaction is thymidine + phosphate = 2-deoxy-alpha-D-ribose 1-phosphate + thymine. It carries out the reaction uridine + phosphate = alpha-D-ribose 1-phosphate + uracil. The enzyme catalyses xanthosine + phosphate = alpha-D-ribose 1-phosphate + xanthine. Catalyzes the phosphorolysis of diverse nucleosides, yielding D-ribose 1-phosphate and the respective free bases. Can use uridine, adenosine, guanosine, cytidine, thymidine, inosine and xanthosine as substrates. Also catalyzes the reverse reactions. This is Pyrimidine/purine nucleoside phosphorylase from Pseudomonas entomophila (strain L48).